The chain runs to 396 residues: Elongation factor Tu (396 aa).

Positions 11–205 (KPHVNIGTIG…VVDEYIPTPE (195 aa)) constitute a tr-type G domain. The segment at 20-27 (GHVDHGKT) is G1. Position 20–27 (20–27 (GHVDHGKT)) interacts with GTP. Thr-27 is a binding site for Mg(2+). Residues 61-65 (GITIN) form a G2 region. Residues 82–85 (DAPG) are G3. GTP contacts are provided by residues 82 to 86 (DAPGH) and 137 to 140 (NKCD). The tract at residues 137 to 140 (NKCD) is G4. Residues 175–177 (SAL) form a G5 region.

Belongs to the TRAFAC class translation factor GTPase superfamily. Classic translation factor GTPase family. EF-Tu/EF-1A subfamily. As to quaternary structure, monomer.

The protein localises to the cytoplasm. The enzyme catalyses GTP + H2O = GDP + phosphate + H(+). In terms of biological role, GTP hydrolase that promotes the GTP-dependent binding of aminoacyl-tRNA to the A-site of ribosomes during protein biosynthesis. The sequence is that of Elongation factor Tu from Lactobacillus delbrueckii subsp. bulgaricus (strain ATCC 11842 / DSM 20081 / BCRC 10696 / JCM 1002 / NBRC 13953 / NCIMB 11778 / NCTC 12712 / WDCM 00102 / Lb 14).